A 198-amino-acid chain; its full sequence is MIKLIVGLGNPGAEYEATRHNAGFWLVDQLARMGGATLRVEGRFHGLAARARLWDQEVWLLKPSTFMNRSGLAVVSLARFYKILPDEIVVVHDEMDLPAGSAKLKRGGGAGGHNGLKDISAHLGTQDYWRLRLGVGHPRNAPGGAGAGREDVVNFVLKPPRREEQEAIDAALDRCIEPLGLLARGDAERAMAQLHTAR.

Position 15 (Tyr15) interacts with tRNA. The Proton acceptor role is filled by His20. Residues Phe66, Asn68, and Asn114 each contribute to the tRNA site.

The protein belongs to the PTH family. In terms of assembly, monomer.

It is found in the cytoplasm. It catalyses the reaction an N-acyl-L-alpha-aminoacyl-tRNA + H2O = an N-acyl-L-amino acid + a tRNA + H(+). Its function is as follows. Hydrolyzes ribosome-free peptidyl-tRNAs (with 1 or more amino acids incorporated), which drop off the ribosome during protein synthesis, or as a result of ribosome stalling. In terms of biological role, catalyzes the release of premature peptidyl moieties from peptidyl-tRNA molecules trapped in stalled 50S ribosomal subunits, and thus maintains levels of free tRNAs and 50S ribosomes. In Cupriavidus taiwanensis (strain DSM 17343 / BCRC 17206 / CCUG 44338 / CIP 107171 / LMG 19424 / R1) (Ralstonia taiwanensis (strain LMG 19424)), this protein is Peptidyl-tRNA hydrolase.